The primary structure comprises 453 residues: MQAIAKNDIKTGTVVDLTHEGHGVVKIDRFPIFIPQALINEQIEYKIIKVKKNFAIGKLLNINTRSENRVAPPCIYYERCGGCQLQHLSYEAQLEMKKEQVINLFQRKAHFDNSKINDTVGMTDPWRYRNKSQIPVGKNEQNEVIMGFYRQRSHDIIDMGSCLIQDSQHQEVMNEVKSILKDLNVSIYQEQLKKGLMRHLVVRTGYHTDEMMVIFVTNGKNWPQKNAVVEKILDAFPNVTSIKQNINDSHSNVIMGRQSITLYGKDTIIDQLTDSTFKISDQSFYQINSEQTEKLYNKAIEYAQLTGNEVVLDTYCGIGTIGLYMAPHAKHVYGVEVVPSAIEDAQQNATINQCNNTTFVCGKAEEVILQWKAQGIKPDVVMVDPPRKGCDETFIQTLLTLEPKRIVYISCNPSTQQRDALLLAEKYQLEEVTPVDMFPQTTHVETVALFNLK.

4 residues coordinate [4Fe-4S] cluster: cysteine 74, cysteine 80, cysteine 83, and cysteine 162. S-adenosyl-L-methionine contacts are provided by glutamine 286, tyrosine 315, glutamate 336, and aspartate 384. Cysteine 411 functions as the Nucleophile in the catalytic mechanism.

Belongs to the class I-like SAM-binding methyltransferase superfamily. RNA M5U methyltransferase family.

This is an uncharacterized protein from Staphylococcus aureus (strain MRSA252).